The chain runs to 398 residues: UDP-N-acetylglucosamine--N-acetylmuramyl-(pentapeptide) pyrophosphoryl-undecaprenol N-acetylglucosamine transferase (398 aa).

Residues 15–17 (TGG), N125, R168, S196, and Q297 contribute to the UDP-N-acetyl-alpha-D-glucosamine site.

This sequence belongs to the glycosyltransferase 28 family. MurG subfamily.

The protein localises to the cell inner membrane. The catalysed reaction is di-trans,octa-cis-undecaprenyl diphospho-N-acetyl-alpha-D-muramoyl-L-alanyl-D-glutamyl-meso-2,6-diaminopimeloyl-D-alanyl-D-alanine + UDP-N-acetyl-alpha-D-glucosamine = di-trans,octa-cis-undecaprenyl diphospho-[N-acetyl-alpha-D-glucosaminyl-(1-&gt;4)]-N-acetyl-alpha-D-muramoyl-L-alanyl-D-glutamyl-meso-2,6-diaminopimeloyl-D-alanyl-D-alanine + UDP + H(+). It functions in the pathway cell wall biogenesis; peptidoglycan biosynthesis. Cell wall formation. Catalyzes the transfer of a GlcNAc subunit on undecaprenyl-pyrophosphoryl-MurNAc-pentapeptide (lipid intermediate I) to form undecaprenyl-pyrophosphoryl-MurNAc-(pentapeptide)GlcNAc (lipid intermediate II). This Erythrobacter litoralis (strain HTCC2594) protein is UDP-N-acetylglucosamine--N-acetylmuramyl-(pentapeptide) pyrophosphoryl-undecaprenol N-acetylglucosamine transferase.